Consider the following 297-residue polypeptide: Phosphatidylinositol N-acetylglucosaminyltransferase subunit C (297 aa).

Transmembrane regions (helical) follow at residues 51–71 (VVFE…FVVI), 80–100 (LAPH…YVLF), 117–137 (WADL…SPVL), 153–173 (SVFM…AAIV), 174–194 (SSTL…SRLP), 196–216 (SLHA…WPML), 227–244 (SYVG…GGLL), and 250–270 (GAVL…FYLI).

The protein belongs to the PIGC family. As to quaternary structure, component of the glycosylphosphatidylinositol-N-acetylglucosaminyltransferase (GPI-GnT) complex composed at least by PIGA, PIGC, PIGH, PIGP, PIGQ, PIGY and DPM2. Interacts with PIGQ. Interacts with the heterodimer PIGA:PIGH.

The protein localises to the endoplasmic reticulum membrane. Its pathway is glycolipid biosynthesis; glycosylphosphatidylinositol-anchor biosynthesis. Part of the glycosylphosphatidylinositol-N-acetylglucosaminyltransferase (GPI-GnT) complex that catalyzes the transfer of N-acetylglucosamine from UDP-N-acetylglucosamine to phosphatidylinositol and participates in the first step of GPI biosynthesis. The chain is Phosphatidylinositol N-acetylglucosaminyltransferase subunit C from Homo sapiens (Human).